Consider the following 1584-residue polypeptide: Kinesin-like protein unc-104 (1584 aa).

Residues 3-347 (SVKVAVRVRP…LRYADRAKQI (345 aa)) enclose the Kinesin motor domain. Residue 93-100 (GQTGSGKS) participates in ATP binding. The microtubule-binding stretch occupies residues 183 to 335 (VCSYHDICNL…PADINFDETL (153 aa)). 3 coiled-coil regions span residues 425 to 445 (EQKL…LRDM), 598 to 652 (IDLK…SYIS), and 777 to 797 (SIEK…TDAE). The segment at 1366–1416 (IPMNKDPPTGNKAQELSDESGSNSITSPVSDKSLIKSSRSSDLLCRQKSKS) is disordered. Positions 1376 to 1394 (NKAQELSDESGSNSITSPV) are enriched in polar residues. Over residues 1395 to 1409 (SDKSLIKSSRSSDLL) the composition is skewed to low complexity. A PH domain is found at 1460-1558 (VVSKKGYMNF…WLYAINPLMA (99 aa)).

The protein belongs to the TRAFAC class myosin-kinesin ATPase superfamily. Kinesin family. Unc-104 subfamily. Interacts with casy-1. In terms of tissue distribution, expressed in nerve ring, amphid commissure and ventral nerve cord (at protein level).

The protein resides in the cytoplasm. Its subcellular location is the cytoskeleton. It is found in the cell projection. The protein localises to the axon. Its function is as follows. Motor protein involved in microtubule-associated anterograde transport. Regulates the transport of synaptic vesicle precursors in the axon of DA motor neurons. Regulates the polarized sorting of axonal proteins. Essential for the transport of synaptic components during the synaptic remodeling of the DD motor neuron, probably downstream of cdk-5 and/or pct-1/cyy-1 complex. Required for the anterograde transport of neuropeptide-containing dense core vesicles along axons. Involved in necrotic cell death. The protein is Kinesin-like protein unc-104 (unc-104) of Caenorhabditis elegans.